We begin with the raw amino-acid sequence, 644 residues long: 1-deoxy-D-xylulose-5-phosphate synthase (644 aa).

Thiamine diphosphate contacts are provided by residues histidine 78 and 120 to 122 (GHA). Residue aspartate 149 coordinates Mg(2+). Thiamine diphosphate is bound by residues 150 to 151 (AA), asparagine 178, and glutamate 373. Asparagine 178 contributes to the Mg(2+) binding site.

The protein belongs to the transketolase family. DXPS subfamily. Homodimer. Mg(2+) is required as a cofactor. Thiamine diphosphate serves as cofactor.

It carries out the reaction D-glyceraldehyde 3-phosphate + pyruvate + H(+) = 1-deoxy-D-xylulose 5-phosphate + CO2. The protein operates within metabolic intermediate biosynthesis; 1-deoxy-D-xylulose 5-phosphate biosynthesis; 1-deoxy-D-xylulose 5-phosphate from D-glyceraldehyde 3-phosphate and pyruvate: step 1/1. Catalyzes the acyloin condensation reaction between C atoms 2 and 3 of pyruvate and glyceraldehyde 3-phosphate to yield 1-deoxy-D-xylulose-5-phosphate (DXP). The sequence is that of 1-deoxy-D-xylulose-5-phosphate synthase from Chlamydia abortus (strain DSM 27085 / S26/3) (Chlamydophila abortus).